The chain runs to 413 residues: Type IV pilus assembly protein TapC (413 aa).

The next 4 helical transmembrane spans lie at tyrosine 180–isoleucine 200, phenylalanine 227–valine 247, leucine 286–alanine 306, and isoleucine 386–phenylalanine 406.

This sequence belongs to the GSP F family.

Its subcellular location is the cell inner membrane. Functionally, involved in the translocation of the type IV pilin. The polypeptide is Type IV pilus assembly protein TapC (tapC) (Aeromonas hydrophila).